The sequence spans 273 residues: Cell division protein ZipA (273 aa).

Position 1 (M1) is a topological domain, periplasmic. The helical transmembrane segment at 2–22 (DIGLREWLIVIGIIVIAGILF) threads the bilayer. Over 23–273 (DGWRRMRGGK…ERRQMTIKQR (251 aa)) the chain is Cytoplasmic. Residues 61 to 127 (VVNREHEPSL…DLQERPQKEQ (67 aa)) form a disordered region.

This sequence belongs to the ZipA family. In terms of assembly, interacts with FtsZ via their C-terminal domains.

The protein localises to the cell inner membrane. Its function is as follows. Essential cell division protein that stabilizes the FtsZ protofilaments by cross-linking them and that serves as a cytoplasmic membrane anchor for the Z ring. Also required for the recruitment to the septal ring of downstream cell division proteins. The chain is Cell division protein ZipA from Stutzerimonas stutzeri (strain A1501) (Pseudomonas stutzeri).